A 433-amino-acid chain; its full sequence is Probable beta-1,3-galactosyl-O-glycosyl-glycoprotein beta-1,6-N-acetylglucosaminyltransferase 7 (433 aa).

The Cytoplasmic portion of the chain corresponds to 1-8 (MSQLRTTK). The helical; Signal-anchor for type II membrane protein transmembrane segment at 9 to 25 (AGLVACGMICAFIFLYL) threads the bilayer. Residues 26–433 (RNPGPEEAEA…QSHFNSQPHH (408 aa)) lie on the Extracellular side of the membrane. 4 disulfides stabilise this stretch: Cys-57-Cys-209, Cys-143-Cys-358, Cys-164-Cys-191, and Cys-367-Cys-398. Asn-112 carries an N-linked (GlcNAc...) asparagine glycan. A disordered region spans residues 233–275 (NITPGVTPPANSKPKTGQGPPKPSPDENSYTAPNTIFKQSPPH). The span at 258–275 (DENSYTAPNTIFKQSPPH) shows a compositional bias: polar residues. The disordered stretch occupies residues 413-433 (VPPEPHWQFPQQSHFNSQPHH). Over residues 421-433 (FPQQSHFNSQPHH) the composition is skewed to polar residues.

Belongs to the glycosyltransferase 14 family.

The protein resides in the golgi apparatus membrane. It participates in protein modification; protein glycosylation. Probable glycosyltransferase. The sequence is that of Probable beta-1,3-galactosyl-O-glycosyl-glycoprotein beta-1,6-N-acetylglucosaminyltransferase 7 from Mus musculus (Mouse).